Reading from the N-terminus, the 493-residue chain is Membrane-bound lytic murein transglycosylase F (493 aa).

Positions 1–21 (MKRLRFNYLLIGLITVLLALA) are cleaved as a signal peptide. A non-LT domain region spans residues 22–268 (LWPSIPWYGG…RLDEKYLGHV (247 aa)). The segment at 269 to 493 (GTFDYVDTRT…LNPVSALPLP (225 aa)) is LT domain. Glutamate 313 is a catalytic residue.

In the N-terminal section; belongs to the bacterial solute-binding protein 3 family. The protein in the C-terminal section; belongs to the transglycosylase Slt family.

The protein resides in the cell outer membrane. It catalyses the reaction Exolytic cleavage of the (1-&gt;4)-beta-glycosidic linkage between N-acetylmuramic acid (MurNAc) and N-acetylglucosamine (GlcNAc) residues in peptidoglycan, from either the reducing or the non-reducing ends of the peptidoglycan chains, with concomitant formation of a 1,6-anhydrobond in the MurNAc residue.. In terms of biological role, murein-degrading enzyme that degrades murein glycan strands and insoluble, high-molecular weight murein sacculi, with the concomitant formation of a 1,6-anhydromuramoyl product. Lytic transglycosylases (LTs) play an integral role in the metabolism of the peptidoglycan (PG) sacculus. Their lytic action creates space within the PG sacculus to allow for its expansion as well as for the insertion of various structures such as secretion systems and flagella. This is Membrane-bound lytic murein transglycosylase F from Erwinia tasmaniensis (strain DSM 17950 / CFBP 7177 / CIP 109463 / NCPPB 4357 / Et1/99).